The chain runs to 121 residues: Small ribosomal subunit protein uS13 (121 aa).

A disordered region spans residues 91–121 (HRMSLPVRGQRTRTNARTRRGSRKTVAGRKK). Residues 100-121 (QRTRTNARTRRGSRKTVAGRKK) are compositionally biased toward basic residues.

It belongs to the universal ribosomal protein uS13 family. Part of the 30S ribosomal subunit. Forms a loose heterodimer with protein S19. Forms two bridges to the 50S subunit in the 70S ribosome.

Located at the top of the head of the 30S subunit, it contacts several helices of the 16S rRNA. In the 70S ribosome it contacts the 23S rRNA (bridge B1a) and protein L5 of the 50S subunit (bridge B1b), connecting the 2 subunits; these bridges are implicated in subunit movement. Contacts the tRNAs in the A and P-sites. This chain is Small ribosomal subunit protein uS13, found in Prochlorococcus marinus (strain MIT 9515).